The chain runs to 170 residues: Large ribosomal subunit protein uL22c (170 aa).

Belongs to the universal ribosomal protein uL22 family. As to quaternary structure, part of the 50S ribosomal subunit.

It is found in the plastid. It localises to the chloroplast. In terms of biological role, this protein binds specifically to 23S rRNA. Functionally, the globular domain of the protein is located near the polypeptide exit tunnel on the outside of the subunit, while an extended beta-hairpin is found that lines the wall of the exit tunnel in the center of the 70S ribosome. The chain is Large ribosomal subunit protein uL22c (rpl22) from Nandina domestica (Heavenly bamboo).